Reading from the N-terminus, the 170-residue chain is MQTTIRIIGIDPGLRRTGWGIIETLGNSLRFVASGTVTSDGEMDLASRLCQLHDGLAEVVHGYQPHEAAVEQTFVNKDATATLKLGQARGIAMLVPARAGLRVAEYAPNAVKKAVIGVGHGEKQQIHMMLKVLMPKAEFKGNDAADALAIAICHAHNRQAVTSRLAALAG.

Residues D11, E71, and D143 contribute to the active site. Mg(2+) is bound by residues D11, E71, and D143.

It belongs to the RuvC family. In terms of assembly, homodimer which binds Holliday junction (HJ) DNA. The HJ becomes 2-fold symmetrical on binding to RuvC with unstacked arms; it has a different conformation from HJ DNA in complex with RuvA. In the full resolvosome a probable DNA-RuvA(4)-RuvB(12)-RuvC(2) complex forms which resolves the HJ. Mg(2+) serves as cofactor.

The protein resides in the cytoplasm. It catalyses the reaction Endonucleolytic cleavage at a junction such as a reciprocal single-stranded crossover between two homologous DNA duplexes (Holliday junction).. Functionally, the RuvA-RuvB-RuvC complex processes Holliday junction (HJ) DNA during genetic recombination and DNA repair. Endonuclease that resolves HJ intermediates. Cleaves cruciform DNA by making single-stranded nicks across the HJ at symmetrical positions within the homologous arms, yielding a 5'-phosphate and a 3'-hydroxyl group; requires a central core of homology in the junction. The consensus cleavage sequence is 5'-(A/T)TT(C/G)-3'. Cleavage occurs on the 3'-side of the TT dinucleotide at the point of strand exchange. HJ branch migration catalyzed by RuvA-RuvB allows RuvC to scan DNA until it finds its consensus sequence, where it cleaves and resolves the cruciform DNA. This Sinorhizobium fredii (strain NBRC 101917 / NGR234) protein is Crossover junction endodeoxyribonuclease RuvC.